The following is a 250-amino-acid chain: PF03932 family protein CutC (250 aa).

It belongs to the CutC family.

The protein localises to the cytoplasm. This chain is PF03932 family protein CutC, found in Proteus mirabilis (strain HI4320).